Consider the following 114-residue polypeptide: Immunomodulatory protein FIP-Fve (114 aa).

At S1 the chain carries N-acetylserine.

It belongs to the fungal immunomodulatory protein (FIP) family. Homodimer.

In terms of biological role, lectin with specificity for complex cell-surface carbohydrates. Possesses immunomodulatory activity, stimulates lymphocyte mitogenesis, suppresses systemic anaphylaxis reactions and edema, enhances transcription of IL-2, IFN-gamma and TNF-alpha and hemagglutinates red blood cells. The chain is Immunomodulatory protein FIP-Fve from Flammulina velutipes (Agaricus velutipes).